The following is a 406-amino-acid chain: Nodal homolog (406 aa).

The N-terminal stretch at 1 to 18 (MAFLTAVLYLGFACISQG) is a signal peptide. Positions 19-281 (LPTWPDRVES…RVPGIRRHRR (263 aa)) are excised as a propeptide. N-linked (GlcNAc...) asparagine glycans are attached at residues asparagine 71, asparagine 136, and asparagine 172. Positions 195–222 (KERAERGSGMSNAEFIDAPGPSQQYNPH) are disordered. Disulfide bonds link cysteine 306–cysteine 372, cysteine 335–cysteine 403, and cysteine 339–cysteine 405. The N-linked (GlcNAc...) asparagine glycan is linked to asparagine 344.

It belongs to the TGF-beta family. Homodimer; disulfide-linked. Interacts with, and is inhibited by cer1 and gdf10/bmp3b. As to expression, in the first phase of expression, localized to the vegetal region of the blastula. During gastrulation (stage 10.5), this expression disappears and instead becomes localized to the dorsal marginal zone, with enrichment in the organizer. During the second phase of expression in neurulae and tailbud embryos, expression restarts firstly in two symmetric patches near the posterior end of the notochord, and then in a large asymmetrical domain in the left lateral plate mesoderm.

The protein resides in the secreted. Its function is as follows. Cooperation and regulatory loops of multiple nodals are essential for mesendoderm patterning in early embryos. Essential for mesoderm formation and axial patterning during embryonic development. Activates the activin-like signaling pathway to induce dorsal and ventral mesoderm in animal cap ectoderm. In addition, also dorsalizes ventral marginal zone (VMZ) tissues during gastrulation. Acts in a downstream signaling cascade via cripto and cer1 to mediate cardiogenesis in embryonic mesoderm. Directs the orientation of the left-right axis by driving the left-specific gene cascade in the left lateral plate mesoderm. The polypeptide is Nodal homolog (Xenopus laevis (African clawed frog)).